The sequence spans 1873 residues: SAGA complex subunit Spt20 (1873 aa).

The protein belongs to the SPT20 family. In terms of assembly, component of the Spt-Ada-Gcn5 acetyltransferase (SAGA) complex consisting of wda/Taf5L, Saf6, Taf9, Taf10b, Taf12, Ada1, Spt3, Spt7, Spt20, Sf3b3, Sf3b5, Nipped-A/Tra1, a histone acetyltransferase (HAT) module made up of Gcn5, Ada2b (Isoform B), Ada3 and Sgf29, and a deubiquitinase (DUB) module made up of not/nonstop, Sgf11 and e(y)2 tethered to SAGA by Atxn7.

It localises to the nucleus. Functionally, component of the transcription regulatory complex SAGA, a multiprotein complex that activates transcription by remodeling chromatin and mediating histone acetylation and deubiquitination. The SAGA complex predominantly acetylates histone H3. The sequence is that of SAGA complex subunit Spt20 from Drosophila melanogaster (Fruit fly).